Reading from the N-terminus, the 315-residue chain is Acetaldehyde dehydrogenase 2 (315 aa).

11 to 14 (SGNI) is an NAD(+) binding site. Cys-129 (acyl-thioester intermediate) is an active-site residue. NAD(+)-binding positions include 160-168 (SAGPGTRSN) and Asn-290.

The protein belongs to the acetaldehyde dehydrogenase family.

It catalyses the reaction acetaldehyde + NAD(+) + CoA = acetyl-CoA + NADH + H(+). The sequence is that of Acetaldehyde dehydrogenase 2 from Mycobacterium sp. (strain KMS).